The sequence spans 270 residues: DNA-directed RNA polymerase subunit Rpo3 (270 aa).

[3Fe-4S] cluster contacts are provided by C206, C209, and C212.

Belongs to the archaeal Rpo3/eukaryotic RPB3 RNA polymerase subunit family. In terms of assembly, part of the RNA polymerase complex. It depends on [3Fe-4S] cluster as a cofactor.

The protein localises to the cytoplasm. The catalysed reaction is RNA(n) + a ribonucleoside 5'-triphosphate = RNA(n+1) + diphosphate. In terms of biological role, DNA-dependent RNA polymerase (RNAP) catalyzes the transcription of DNA into RNA using the four ribonucleoside triphosphates as substrates. The sequence is that of DNA-directed RNA polymerase subunit Rpo3 from Methanosphaera stadtmanae (strain ATCC 43021 / DSM 3091 / JCM 11832 / MCB-3).